The following is an 88-amino-acid chain: Co-chaperonin GroES (88 aa).

Belongs to the GroES chaperonin family. As to quaternary structure, heptamer of 7 subunits arranged in a ring. Interacts with the chaperonin GroEL.

The protein localises to the cytoplasm. Functionally, together with the chaperonin GroEL, plays an essential role in assisting protein folding. The GroEL-GroES system forms a nano-cage that allows encapsulation of the non-native substrate proteins and provides a physical environment optimized to promote and accelerate protein folding. GroES binds to the apical surface of the GroEL ring, thereby capping the opening of the GroEL channel. The sequence is that of Co-chaperonin GroES from Treponema denticola (strain ATCC 35405 / DSM 14222 / CIP 103919 / JCM 8153 / KCTC 15104).